We begin with the raw amino-acid sequence, 239 residues long: 1-(5-phosphoribosyl)-5-[(5-phosphoribosylamino)methylideneamino] imidazole-4-carboxamide isomerase (239 aa).

Asp8 acts as the Proton acceptor in catalysis. Residue Asp129 is the Proton donor of the active site.

Belongs to the HisA/HisF family.

The protein resides in the cytoplasm. The catalysed reaction is 1-(5-phospho-beta-D-ribosyl)-5-[(5-phospho-beta-D-ribosylamino)methylideneamino]imidazole-4-carboxamide = 5-[(5-phospho-1-deoxy-D-ribulos-1-ylimino)methylamino]-1-(5-phospho-beta-D-ribosyl)imidazole-4-carboxamide. It participates in amino-acid biosynthesis; L-histidine biosynthesis; L-histidine from 5-phospho-alpha-D-ribose 1-diphosphate: step 4/9. The sequence is that of 1-(5-phosphoribosyl)-5-[(5-phosphoribosylamino)methylideneamino] imidazole-4-carboxamide isomerase from Paramagnetospirillum magneticum (strain ATCC 700264 / AMB-1) (Magnetospirillum magneticum).